We begin with the raw amino-acid sequence, 260 residues long: 3-methyl-2-oxobutanoate hydroxymethyltransferase (260 aa).

2 residues coordinate Mg(2+): D44 and D83. 3-methyl-2-oxobutanoate is bound by residues 44–45 (DS), D83, and K113. E115 is a binding site for Mg(2+). E182 serves as the catalytic Proton acceptor.

The protein belongs to the PanB family. Homodecamer; pentamer of dimers. The cofactor is Mg(2+).

It localises to the cytoplasm. It catalyses the reaction 3-methyl-2-oxobutanoate + (6R)-5,10-methylene-5,6,7,8-tetrahydrofolate + H2O = 2-dehydropantoate + (6S)-5,6,7,8-tetrahydrofolate. Its pathway is cofactor biosynthesis; (R)-pantothenate biosynthesis; (R)-pantoate from 3-methyl-2-oxobutanoate: step 1/2. Functionally, catalyzes the reversible reaction in which hydroxymethyl group from 5,10-methylenetetrahydrofolate is transferred onto alpha-ketoisovalerate to form ketopantoate. The chain is 3-methyl-2-oxobutanoate hydroxymethyltransferase from Synechocystis sp. (strain ATCC 27184 / PCC 6803 / Kazusa).